Here is a 196-residue protein sequence, read N- to C-terminus: Guanylate kinase (196 aa).

Residues arginine 7–leucine 191 form the Guanylate kinase-like domain. Glycine 14–glycine 21 contributes to the ATP binding site.

It belongs to the guanylate kinase family.

It localises to the cytoplasm. It catalyses the reaction GMP + ATP = GDP + ADP. Functionally, essential for recycling GMP and indirectly, cGMP. This Mycoplasmopsis pulmonis (strain UAB CTIP) (Mycoplasma pulmonis) protein is Guanylate kinase.